We begin with the raw amino-acid sequence, 229 residues long: Flagellar L-ring protein (229 aa).

A signal peptide spans 1–25 (MKQVRLLPSATVRAACAVAVAALAG). C26 is lipidated: N-palmitoyl cysteine. C26 carries the S-diacylglycerol cysteine lipid modification.

Belongs to the FlgH family. The basal body constitutes a major portion of the flagellar organelle and consists of four rings (L,P,S, and M) mounted on a central rod.

The protein localises to the cell outer membrane. Its subcellular location is the bacterial flagellum basal body. In terms of biological role, assembles around the rod to form the L-ring and probably protects the motor/basal body from shearing forces during rotation. The polypeptide is Flagellar L-ring protein (Burkholderia vietnamiensis (strain G4 / LMG 22486) (Burkholderia cepacia (strain R1808))).